Consider the following 126-residue polypeptide: Antimicrobial protein 1 (126 aa).

An N-terminal signal peptide occupies residues 1 to 24 (MRSSLLLGLTVVLLLGVTVPPCMA).

Strongly expressed in gills, hemocytes and reproductive tract, with weaker expression in muscle, heart and digestive tract. Not detected in eyes and hepatopancreas (at protein level).

It is found in the secreted. Functionally, has antibacterial activity against the Gram-positive bacteria E.coli (MIC&lt;50 ug/ml) and P.aeruginosa (MIC&lt;25 ug/ml), and the Gram-negative bacteria S.aureus (MIC&lt;100 ug/ml) and S.pyogenes (MIC&lt;50 ug/ml). The polypeptide is Antimicrobial protein 1 (Scylla serrata (Mud crab)).